Consider the following 1347-residue polypeptide: MAPSRKRGGGRAAAASSARREWKVGDLVLAKVKGFPAWPAVVDEPEKWGHSADSKKVTVHFFGTQQIAFCNHGDVESFTEEKKQSLLTRRHAKGSDFVRAVKEITESYEKLKQQDQASGPKYAEETTAGSSGNTSQLPQACENLIGSRLDTQIESSSSHGRDELTLLSEDASAAEQMLALRHNTLAHNGACDSAAAKDLCEIATYSSRRRNERVRALKYAPQSIILPVEHSKISSRLELDRVQRSMLQCSDGGPSVNSINGKAIRRRKRIRTSGQSESDDVVSSDLNLHGSDEDNASEIATVESNNNSRNEGNGVDSGSKVEYSDAVGEGCDGGHELNKGLDFHISTMVKRKKRKPTRKRETSDIIDPPAKVEAEGLGPNACDSCQRSQNSHERLNERPCEENGDEHLPLVKRARVRMSRAFYADEKVNASSQVEERSSKDTLLSAALQTSPSVNHENGIGSGHDTSAAEEFNSFELSAKLSGVMVDVVPSHMEKPSDRMSPSVACVQTVGDRQTAVNFHENEFTMTLDDEVTRAQSNQLSSLVETEARVPEVVQGCSEESQTGNCLISETDPIDIQCSHQSEKHETPLNPDIVDSSANKSPGLCSSLDMTTTVVPAQSPHQHKIQEYDSSDHSLVIVGDSLNGKCEKIDYCMTQVVQSQALEPPPPLFCSVVNYQEVENLQETENTLWKENQGSPGKELDSDKQAHMIQNPVLSATESEMIVDDAEPQYETVYSHCADAVENRELEKSCEVDEQKEQMQATNSISVSENFSREKLNSSPARGTPNCNSVCRISTAESENAMQNNSYYSTNVQYGENKSLNVDTVKEESKVETGTTQVKKVVSSDVQCTVESFETALDSLVRTKETIGRATRLAMDLAKFGVSAKAMEILAHTLESESNLQRRVDLFFLVDSIAQCSKGLNGDAGGVYLSSIQAMLPRLLTAAVPAGATTQENRKQCLKVLRLWLERRILPESIVRHHIRELDSLSNVPACLYSRRSARTERALDDPVRDMEGILVDEYGSNSTLQLHGFCIPPILRDEDEGSDSDGGDFESVTPEHESRSLEEHVTPSITERHTRILEDVDGELEMEDVAPPWEGGSSASAITDQADNRESANCLLVPGTSHQNVTSSSPPARPSQNAQLAMSNSYSNGFDYRRNPSMQGDYHAGPPRMNPPMHYGSPEPSYSSRVSLSKSMPRGEGSNFQHRPYPSSHPPPPPPSHHYSYMEPDHHIKSRREGLSYPHRSHYTLEFDERNYQDSYERMRPEPCENRDNWRYHPPSSHGPRYHDRHKGPHQSSSYSGHHRDSGRLQNNRWSDSPRAYNNRHSYHYKQHSEGPVPVGMRDPGTWHQR.

A PWWP domain is found at 24–81 (VGDLVLAKVKGFPAWPAVVDEPEKWGHSADSKKVTVHFFGTQQIAFCNHGDVESFTEE). Disordered regions lie at residues 110-137 (KLKQQDQASGPKYAEETTAGSSGNTSQL), 251-320 (DGGP…SGSK), and 383-402 (DSCQRSQNSHERLNERPCEE). Residues 127–137 (TAGSSGNTSQL) are compositionally biased toward polar residues. Positions 302 to 314 (VESNNNSRNEGNG) are enriched in low complexity. Over residues 390–402 (NSHERLNERPCEE) the composition is skewed to basic and acidic residues. Residues 845-986 (DVQCTVESFE…HHIRELDSLS (142 aa)) enclose the CID domain. Disordered regions lie at residues 1037–1069 (RDEDEGSDSDGGDFESVTPEHESRSLEEHVTPS), 1121–1140 (TSHQNVTSSSPPARPSQNAQ), 1147–1223 (YSNG…YSYM), and 1259–1347 (RMRP…WHQR). Residues 1038–1049 (DEDEGSDSDGGD) show a composition bias toward acidic residues. Basic and acidic residues predominate over residues 1054 to 1069 (TPEHESRSLEEHVTPS). Polar residues predominate over residues 1181–1191 (PSYSSRVSLSK). Positions 1208–1217 (SSHPPPPPPS) are enriched in pro residues. Residues 1259–1272 (RMRPEPCENRDNWR) show a composition bias toward basic and acidic residues.

Expressed throughout young primordia, and vegetative and reproductive apices.

It is found in the nucleus. Its function is as follows. Probable transcription factor that acts with partial redundancy with HULK1 and HULK2. Plays diverse and essential roles in the control of plant development, physiology and flowering time. This chain is Protein HUA2-LIKE 3, found in Arabidopsis thaliana (Mouse-ear cress).